A 310-amino-acid polypeptide reads, in one-letter code: UDP-N-acetylenolpyruvoylglucosamine reductase (310 aa).

In terms of domain architecture, FAD-binding PCMH-type spans 34–213; it reads RAGGNAEVLF…LRRMNEITSS (180 aa). Arg-178 is a catalytic residue. Ser-227 functions as the Proton donor in the catalytic mechanism. Glu-297 is a catalytic residue.

It belongs to the MurB family. Requires FAD as cofactor.

It localises to the cytoplasm. It carries out the reaction UDP-N-acetyl-alpha-D-muramate + NADP(+) = UDP-N-acetyl-3-O-(1-carboxyvinyl)-alpha-D-glucosamine + NADPH + H(+). The protein operates within cell wall biogenesis; peptidoglycan biosynthesis. Functionally, cell wall formation. This Parvibaculum lavamentivorans (strain DS-1 / DSM 13023 / NCIMB 13966) protein is UDP-N-acetylenolpyruvoylglucosamine reductase.